Here is a 327-residue protein sequence, read N- to C-terminus: PDZ and LIM domain protein 1 (327 aa).

T2 bears the N-acetylthreonine mark. The region spanning 3–85 is the PDZ domain; sequence TQQIVLQGPG…NMTLTVSRSE (83 aa). 2 positions are modified to phosphoserine: S90 and S130. At Y142 the chain carries Phosphotyrosine. Positions 161–184 are disordered; the sequence is VESKTSASGEEANSRPVVQPHPSG. The LIM zinc-binding domain maps to 256–315; sequence PICDKCGTGIVGVFVKLRDHHRHPECYVCTDCGINLKQKGHFFVEDQIYCEKHARERVTP. The Zn(2+) site is built by C258, C261, H278, C281, C284, C287, C305, and H308. At T314 the chain carries Phosphothreonine. Y319 carries the post-translational modification Phosphotyrosine.

Interacts with ACTN1, ACTN2 and ACTN4. Interacts with PDLIM4. In terms of tissue distribution, expressed in heart, lung, spleen, testis and skeletal muscle.

It localises to the cytoplasm. Its subcellular location is the cytoskeleton. The protein localises to the myofibril. It is found in the sarcomere. The protein resides in the z line. Functionally, cytoskeletal protein that may act as an adapter that brings other proteins (like kinases) to the cytoskeleton. Involved in assembly, disassembly and directioning of stress fibers in fibroblasts. Required for the localization of ACTN1 and PALLD to stress fibers. Required for cell migration and in maintaining cell polarity of fibroblasts. This is PDZ and LIM domain protein 1 (Pdlim1) from Mus musculus (Mouse).